The primary structure comprises 184 residues: Jacalin-related lectin 2 (184 aa).

Positions Lys-4 to Pro-163 constitute a Jacalin-type lectin domain.

It belongs to the jacalin lectin family.

This Arabidopsis thaliana (Mouse-ear cress) protein is Jacalin-related lectin 2 (JAL2).